The primary structure comprises 697 residues: Methionine--tRNA ligase (697 aa).

Residues P11 to H21 carry the 'HIGH' region motif. C142, C145, C155, and C158 together coordinate Zn(2+). A 'KMSKS' region motif is present at residues K343–S347. K346 is a binding site for ATP. The tRNA-binding domain occupies D595–A697.

It belongs to the class-I aminoacyl-tRNA synthetase family. MetG type 1 subfamily. In terms of assembly, homodimer. It depends on Zn(2+) as a cofactor.

Its subcellular location is the cytoplasm. It carries out the reaction tRNA(Met) + L-methionine + ATP = L-methionyl-tRNA(Met) + AMP + diphosphate. Is required not only for elongation of protein synthesis but also for the initiation of all mRNA translation through initiator tRNA(fMet) aminoacylation. The chain is Methionine--tRNA ligase from Psychrobacter sp. (strain PRwf-1).